Consider the following 446-residue polypeptide: Exodeoxyribonuclease 7 large subunit (446 aa).

Belongs to the XseA family. As to quaternary structure, heterooligomer composed of large and small subunits.

The protein resides in the cytoplasm. It catalyses the reaction Exonucleolytic cleavage in either 5'- to 3'- or 3'- to 5'-direction to yield nucleoside 5'-phosphates.. Bidirectionally degrades single-stranded DNA into large acid-insoluble oligonucleotides, which are then degraded further into small acid-soluble oligonucleotides. The chain is Exodeoxyribonuclease 7 large subunit from Xanthomonas campestris pv. campestris (strain B100).